We begin with the raw amino-acid sequence, 127 residues long: Protein ApaG (127 aa).

One can recognise an ApaG domain in the interval 3–127 (DTNKYRIEVQ…FVLASPRALH (125 aa)).

This is Protein ApaG from Dechloromonas aromatica (strain RCB).